Here is a 469-residue protein sequence, read N- to C-terminus: Mannosyl-oligosaccharide 1,2-alpha-mannosidase IA (469 aa).

Over 1–469 (REPADAAVRE…DQKEVEVKVK (469 aa)) the chain is Lumenal. The cysteines at positions 292 and 324 are disulfide-linked. The N-linked (GlcNAc...) asparagine glycan is linked to asparagine 329. Residue glutamate 338 is the Proton donor of the active site. Ca(2+) is bound at residue threonine 449.

It belongs to the glycosyl hydrolase 47 family. It depends on Ca(2+) as a cofactor.

The protein resides in the golgi apparatus membrane. The enzyme catalyses N(4)-(alpha-D-Man-(1-&gt;2)-alpha-D-Man-(1-&gt;2)-alpha-D-Man-(1-&gt;3)-[alpha-D-Man-(1-&gt;2)-alpha-D-Man-(1-&gt;3)-[alpha-D-Man-(1-&gt;2)-alpha-D-Man-(1-&gt;6)]-alpha-D-Man-(1-&gt;6)]-beta-D-Man-(1-&gt;4)-beta-D-GlcNAc-(1-&gt;4)-beta-D-GlcNAc)-L-asparaginyl-[protein] (N-glucan mannose isomer 9A1,2,3B1,2,3) + 4 H2O = N(4)-(alpha-D-Man-(1-&gt;3)-[alpha-D-Man-(1-&gt;3)-[alpha-D-Man-(1-&gt;6)]-alpha-D-Man-(1-&gt;6)]-beta-D-Man-(1-&gt;4)-beta-D-GlcNAc-(1-&gt;4)-beta-D-GlcNAc)-L-asparaginyl-[protein] (N-glucan mannose isomer 5A1,2) + 4 beta-D-mannose. The catalysed reaction is N(4)-(alpha-D-Man-(1-&gt;2)-alpha-D-Man-(1-&gt;2)-alpha-D-Man-(1-&gt;3)-[alpha-D-Man-(1-&gt;3)-[alpha-D-Man-(1-&gt;2)-alpha-D-Man-(1-&gt;6)]-alpha-D-Man-(1-&gt;6)]-beta-D-Man-(1-&gt;4)-beta-D-GlcNAc-(1-&gt;4)-beta-D-GlcNAc)-L-asparaginyl-[protein] (N-glucan mannose isomer 8A1,2,3B1,3) + 3 H2O = N(4)-(alpha-D-Man-(1-&gt;3)-[alpha-D-Man-(1-&gt;3)-[alpha-D-Man-(1-&gt;6)]-alpha-D-Man-(1-&gt;6)]-beta-D-Man-(1-&gt;4)-beta-D-GlcNAc-(1-&gt;4)-beta-D-GlcNAc)-L-asparaginyl-[protein] (N-glucan mannose isomer 5A1,2) + 3 beta-D-mannose. It functions in the pathway protein modification; protein glycosylation. Inhibited by both 1-deoxymannojirimycin and kifunensine. Functionally, involved in the maturation of Asn-linked oligosaccharides. Progressively trim alpha-1,2-linked mannose residues from Man(9)GlcNAc(2) to produce Man(5)GlcNAc(2). The chain is Mannosyl-oligosaccharide 1,2-alpha-mannosidase IA (MAN1A1) from Oryctolagus cuniculus (Rabbit).